The primary structure comprises 602 residues: MQSERQKYIRNFSIVAHIDHGKSTLADRLIEATGTLTEREMDTQVLDNMDLEKERGITIKSQAVRLIYKRDTGEEYTLNLIDTPGHVDFNYEVSRSLAACEGAILVVDATQGIQAQTLANCYLALDNDLEIVPVINKIDLPSARPEEVKQEIEDVIGIEAEGAPLVSAKTGLNIKDALEAIVNKVPAPDGDEKAPLKALIFDSYYDSYKGVVCHIRVKEGTIKEGTEIKLMNTGKVYEVVEVGVFVPNYMPVDELKAGDVGYVTASIKNVRDARVGDTITEAKRSANEALSGYRPAVPMVFSGIYPVDGAKYEELKEALEKLQVNDAALSFEPETSIALGFGFRCGFLGLLHMDIIQERLEREFNLDIITTAPSVIYKITKTDGTLIELTNPTNMPSPSEIKLMEEPIVKSSIITPSDYVGAVMDLAQNRRGIFKDMQYLDTTRVSLNYEIPLNEIIYDFFDALKSRTRGYASFDYELIGYKDADLVKLDILLNADIVDALSMIVPRERAYAKGRNMAQKLKEIIPRQMFEIPIQAAVGAKIIARETIKAMRKDVLAKCYGGDISRKRKLLEKQKEGKKRMRQVGSVEVPQEAFMAVLKTEE.

Positions 7 to 189 (KYIRNFSIVA…AIVNKVPAPD (183 aa)) constitute a tr-type G domain. GTP contacts are provided by residues 19–24 (DHGKST) and 136–139 (NKID).

It belongs to the TRAFAC class translation factor GTPase superfamily. Classic translation factor GTPase family. LepA subfamily.

The protein resides in the cell membrane. It catalyses the reaction GTP + H2O = GDP + phosphate + H(+). Functionally, required for accurate and efficient protein synthesis under certain stress conditions. May act as a fidelity factor of the translation reaction, by catalyzing a one-codon backward translocation of tRNAs on improperly translocated ribosomes. Back-translocation proceeds from a post-translocation (POST) complex to a pre-translocation (PRE) complex, thus giving elongation factor G a second chance to translocate the tRNAs correctly. Binds to ribosomes in a GTP-dependent manner. This Clostridium botulinum (strain 657 / Type Ba4) protein is Elongation factor 4.